We begin with the raw amino-acid sequence, 149 residues long: Probable glycine cleavage system H protein 2 (149 aa).

Residues 32 to 114 (IAVVGITDLA…YGQGWIAKIK (83 aa)) enclose the Lipoyl-binding domain. K73 carries the post-translational modification N6-lipoyllysine.

This sequence belongs to the GcvH family. The glycine cleavage system is composed of four proteins: P, T, L and H. (R)-lipoate serves as cofactor.

Functionally, the glycine cleavage system catalyzes the degradation of glycine. The H protein shuttles the methylamine group of glycine from the P protein to the T protein. This is Probable glycine cleavage system H protein 2 from Sulfolobus acidocaldarius (strain ATCC 33909 / DSM 639 / JCM 8929 / NBRC 15157 / NCIMB 11770).